The primary structure comprises 84 residues: Small ribosomal subunit protein uS17 (84 aa).

This sequence belongs to the universal ribosomal protein uS17 family. In terms of assembly, part of the 30S ribosomal subunit.

Its function is as follows. One of the primary rRNA binding proteins, it binds specifically to the 5'-end of 16S ribosomal RNA. The sequence is that of Small ribosomal subunit protein uS17 from Histophilus somni (strain 129Pt) (Haemophilus somnus).